The primary structure comprises 345 residues: 3-hydroxy-5-methyl-1-naphthoate 3-O-methyltransferase (345 aa).

D205 provides a ligand contact to S-adenosyl-L-methionine. The active-site Proton acceptor is the H252.

The protein belongs to the class I-like SAM-binding methyltransferase superfamily. Cation-independent O-methyltransferase family.

The enzyme catalyses 3-hydroxy-5-methyl-1-naphthoate + S-adenosyl-L-methionine = 3-methoxy-5-methyl-1-naphthoate + S-adenosyl-L-homocysteine + H(+). It participates in antibiotic biosynthesis. Its activity is regulated as follows. Inhibited by different divalent cations, such as Mg(2+), Mn(2+), Fe(2+), Cu(2+) and Zn(2+). Functionally, O-methyltransferase that mediates the formation of 3-methoxy-5-methyl-1-naphthoate from 3-hydroxy-5-methyl-1-naphthoate in the biosynthesis of the antitumor antibiotic azinomycin B. The sequence is that of 3-hydroxy-5-methyl-1-naphthoate 3-O-methyltransferase from Streptomyces sahachiroi.